We begin with the raw amino-acid sequence, 366 residues long: Mitochondrial substrate carrier family protein H (366 aa).

Residues 1–25 (MLSNSVNNNNNNNNINNSNSNNNDS) show a composition bias toward low complexity. Residues 1-26 (MLSNSVNNNNNNNNINNSNSNNNDSN) form a disordered region. Solcar repeat units lie at residues 29 to 121 (KNVK…LKEY), 132 to 243 (NIYT…LKNK), and 259 to 360 (SPFF…IKQS). The next 6 helical transmembrane spans lie at 35 to 55 (MVAS…LDVV), 96 to 112 (GVTP…TIYF), 133 to 151 (IYTV…SASV), 175 to 192 (VAMA…IPLS), 262 to 282 (FINF…TTPI), and 340 to 357 (VAKV…FEYI).

It belongs to the mitochondrial carrier (TC 2.A.29) family.

It localises to the mitochondrion inner membrane. Its function is as follows. Mitochondrial transporter required for glutathione import into mitochondria. This Dictyostelium discoideum (Social amoeba) protein is Mitochondrial substrate carrier family protein H.